The sequence spans 147 residues: Large ribosomal subunit protein bL9 (147 aa).

Belongs to the bacterial ribosomal protein bL9 family.

Its function is as follows. Binds to the 23S rRNA. This is Large ribosomal subunit protein bL9 from Citrifermentans bemidjiense (strain ATCC BAA-1014 / DSM 16622 / JCM 12645 / Bem) (Geobacter bemidjiensis).